A 183-amino-acid polypeptide reads, in one-letter code: Large ribosomal subunit protein uL6 (183 aa).

This sequence belongs to the universal ribosomal protein uL6 family. As to quaternary structure, part of the 50S ribosomal subunit.

In terms of biological role, this protein binds to the 23S rRNA, and is important in its secondary structure. It is located near the subunit interface in the base of the L7/L12 stalk, and near the tRNA binding site of the peptidyltransferase center. In Porphyromonas gingivalis (strain ATCC 33277 / DSM 20709 / CIP 103683 / JCM 12257 / NCTC 11834 / 2561), this protein is Large ribosomal subunit protein uL6.